The following is an 837-amino-acid chain: Protein translocase subunit SecA (837 aa).

Residues Gln-85, Gly-103–Thr-107, and Asp-493 contribute to the ATP site. The Zn(2+) site is built by Cys-821, Cys-823, Cys-832, and His-833.

The protein belongs to the SecA family. As to quaternary structure, monomer and homodimer. Part of the essential Sec protein translocation apparatus which comprises SecA, SecYEG and auxiliary proteins SecDF. Other proteins may also be involved. Requires Zn(2+) as cofactor.

It localises to the cell membrane. Its subcellular location is the cytoplasm. It carries out the reaction ATP + H2O + cellular proteinSide 1 = ADP + phosphate + cellular proteinSide 2.. Part of the Sec protein translocase complex. Interacts with the SecYEG preprotein conducting channel. Has a central role in coupling the hydrolysis of ATP to the transfer of proteins into and across the cell membrane, serving as an ATP-driven molecular motor driving the stepwise translocation of polypeptide chains across the membrane. The protein is Protein translocase subunit SecA of Streptococcus pneumoniae (strain ATCC BAA-255 / R6).